Reading from the N-terminus, the 422-residue chain is UDP-N-acetylglucosamine 1-carboxyvinyltransferase (422 aa).

Phosphoenolpyruvate is bound at residue 22–23 (KN). Residue R94 participates in UDP-N-acetyl-alpha-D-glucosamine binding. C118 functions as the Proton donor in the catalytic mechanism. C118 is modified (2-(S-cysteinyl)pyruvic acid O-phosphothioketal). Residues 123 to 127 (RPVDL), D308, and I330 contribute to the UDP-N-acetyl-alpha-D-glucosamine site.

Belongs to the EPSP synthase family. MurA subfamily.

The protein localises to the cytoplasm. It carries out the reaction phosphoenolpyruvate + UDP-N-acetyl-alpha-D-glucosamine = UDP-N-acetyl-3-O-(1-carboxyvinyl)-alpha-D-glucosamine + phosphate. It functions in the pathway cell wall biogenesis; peptidoglycan biosynthesis. In terms of biological role, cell wall formation. Adds enolpyruvyl to UDP-N-acetylglucosamine. This is UDP-N-acetylglucosamine 1-carboxyvinyltransferase from Dinoroseobacter shibae (strain DSM 16493 / NCIMB 14021 / DFL 12).